The chain runs to 273 residues: 1,4-dihydroxy-2-naphthoyl-CoA synthase (273 aa).

Substrate-binding positions include arginine 34, 73 to 77, tyrosine 85, 117 to 121, threonine 143, serine 149, tyrosine 246, and lysine 261; these read SGGDQ and YAVGG. 142-144 contacts hydrogencarbonate; the sequence is QTG. Basic and acidic residues predominate over residues 254-265; the sequence is GRDAFKEKRDPD. Residues 254–273 form a disordered region; that stretch reads GRDAFKEKRDPDFDQFPKFP.

Belongs to the enoyl-CoA hydratase/isomerase family. MenB subfamily. Hydrogencarbonate is required as a cofactor.

It catalyses the reaction 2-succinylbenzoyl-CoA + H(+) = 1,4-dihydroxy-2-naphthoyl-CoA + H2O. Its pathway is quinol/quinone metabolism; 1,4-dihydroxy-2-naphthoate biosynthesis; 1,4-dihydroxy-2-naphthoate from chorismate: step 6/7. The protein operates within quinol/quinone metabolism; menaquinone biosynthesis. Converts o-succinylbenzoyl-CoA (OSB-CoA) to 1,4-dihydroxy-2-naphthoyl-CoA (DHNA-CoA). The protein is 1,4-dihydroxy-2-naphthoyl-CoA synthase of Staphylococcus aureus (strain MSSA476).